The sequence spans 257 residues: Ribonuclease HII (257 aa).

The 187-residue stretch at Ser71–Leu257 folds into the RNase H type-2 domain. Asp77, Glu78, and Asp172 together coordinate a divalent metal cation.

Belongs to the RNase HII family. The cofactor is Mn(2+). Mg(2+) serves as cofactor.

The protein localises to the cytoplasm. The enzyme catalyses Endonucleolytic cleavage to 5'-phosphomonoester.. Endonuclease that specifically degrades the RNA of RNA-DNA hybrids. The sequence is that of Ribonuclease HII from Streptococcus uberis (strain ATCC BAA-854 / 0140J).